A 352-amino-acid chain; its full sequence is Small ribosomal subunit biogenesis GTPase RsgA 2 (352 aa).

Positions 100–257 (RQDGQIIATN…VIDTPGMREL (158 aa)) constitute a CP-type G domain. GTP-binding positions include 147–150 (TKAD) and 199–207 (GSSGVGKST). Residues Cys-278, Cys-283, His-285, and Cys-291 each coordinate Zn(2+).

Belongs to the TRAFAC class YlqF/YawG GTPase family. RsgA subfamily. Monomer. Associates with 30S ribosomal subunit, binds 16S rRNA. Zn(2+) serves as cofactor.

The protein localises to the cytoplasm. Its function is as follows. One of several proteins that assist in the late maturation steps of the functional core of the 30S ribosomal subunit. Helps release RbfA from mature subunits. May play a role in the assembly of ribosomal proteins into the subunit. Circularly permuted GTPase that catalyzes slow GTP hydrolysis, GTPase activity is stimulated by the 30S ribosomal subunit. This Lactiplantibacillus plantarum (strain ATCC BAA-793 / NCIMB 8826 / WCFS1) (Lactobacillus plantarum) protein is Small ribosomal subunit biogenesis GTPase RsgA 2.